The following is a 557-amino-acid chain: MTKEKTLPLPRSECICPICQEILLEPVTLPCKHTLCNPCFQMTVEKASLCCPFCRKRVSTWARLHSRTRTLVNTELWERIQKQYPKECQRRASGQESDDLADELASCPAPLLCQPGEIRQEYEAEVSKIEAERLAQEEAERKASEDYIQKLLAEEAAQDRLHSEAVQREMEEQLKIDEELARTLSVDLDVSNASCSSVSSVTSKKVVVSKSSKNVKNKQRVSGDIERFLTPRAVAVVGIDESMNSDSSECFIVFDEGEDEMPELSPQCPSTSLIQERGVELIMPYLSDCYKVESNTTSQQDRCSERSQVCNGTYSSCSDSIDMEESMAIKKQSTTAGLFPERGYHSPENGMESNTMNCSTPKHLGMTGTLKRKCEDCSIDLEEKAGSCRNVKKKKLSLTEDCPVPSVHAGKLIELEENLYERRRQEEQDRLLALQLQRELDKELKQVNRGKGSPDEYELRTKRGLKLQECLKLQECQDSPLPLRKEIPVQDNSRNTQSEYSPDENKKPSRKNSVRSARVRQSRAVANTEGSSDGINVLKPINKQPTILDLFQRSAGK.

An RING-type zinc finger spans residues 16–55; that stretch reads CPICQEILLEPVTLPCKHTLCNPCFQMTVEKASLCCPFCR. The LR motif 1 signature appears at 112–130; sequence LCQPGEIRQEYEAEVSKIE. The UMI motif motif lies at 145-153; the sequence is EDYIQKLLA. 2 short sequence motifs (MIU motif) span residues 170-193 and 422-445; these read MEEQ…VSNA and RRRQ…KELK. Residues 449–460 carry the LR motif 2 motif; that stretch reads RGKGSPDEYELR. A disordered region spans residues 482–543; the sequence is PLRKEIPVQD…GINVLKPINK (62 aa). The segment covering 490 to 500 has biased composition (polar residues); it reads QDNSRNTQSEY. Basic residues predominate over residues 508–521; sequence PSRKNSVRSARVRQ.

It belongs to the RNF168 family. In terms of assembly, monomer.

The protein localises to the nucleus. It carries out the reaction S-ubiquitinyl-[E2 ubiquitin-conjugating enzyme]-L-cysteine + [acceptor protein]-L-lysine = [E2 ubiquitin-conjugating enzyme]-L-cysteine + N(6)-ubiquitinyl-[acceptor protein]-L-lysine.. It functions in the pathway protein modification; protein ubiquitination. Its function is as follows. E3 ubiquitin-protein ligase required for accumulation of repair proteins to sites of DNA damage. Acts with ube2n/ubc13 to amplify the rnf8-dependent histone ubiquitination. Recruited to sites of DNA damage at double-strand breaks (DSBs) by binding to ubiquitinated histone H2A and ubiquitinates histone H2A and H2AX, leading to amplify the rnf8-dependent H2A ubiquitination and promoting the formation of 'Lys-63'-linked ubiquitin conjugates. This leads to concentrate ubiquitinated histones H2A and H2AX at DNA lesions to the threshold required for recruitment of tp53bp1 and brca1. Catalyzes monoubiquitination of 'Lys-13' and 'Lys-15' of nucleosomal histone H2A (H2AK13Ub and H2AK15Ub, respectively). This is E3 ubiquitin-protein ligase rnf168 from Xenopus laevis (African clawed frog).